The following is a 310-amino-acid chain: L-lactate dehydrogenase (310 aa).

NAD(+)-binding positions include V17, D38, K43, Y69, and 83–84 (GA). Residues Q86 and R92 each coordinate substrate. NAD(+) is bound by residues S105, 122 to 124 (ATN), and S147. 124-127 (NPVD) lines the substrate pocket. Residue 152–155 (DTAR) coordinates substrate. Residues R157 and H172 each coordinate beta-D-fructose 1,6-bisphosphate. The Proton acceptor role is filled by H179. Y218 bears the Phosphotyrosine mark. T227 contributes to the substrate binding site.

The protein belongs to the LDH/MDH superfamily. LDH family. Homotetramer.

The protein resides in the cytoplasm. It catalyses the reaction (S)-lactate + NAD(+) = pyruvate + NADH + H(+). It functions in the pathway fermentation; pyruvate fermentation to lactate; (S)-lactate from pyruvate: step 1/1. Its activity is regulated as follows. Allosterically activated by fructose 1,6-bisphosphate (FBP). Catalyzes the conversion of lactate to pyruvate. This is L-lactate dehydrogenase from Halalkalibacterium halodurans (strain ATCC BAA-125 / DSM 18197 / FERM 7344 / JCM 9153 / C-125) (Bacillus halodurans).